Here is a 375-residue protein sequence, read N- to C-terminus: Platelet-derived growth factor receptor-like protein (375 aa).

Residues 1–21 (MKVWLLLGLLLVHEALEDVTG) form the signal peptide. The segment at 22 to 64 (QHLPKNKRPKEPGENRIKPTNKKVKPKIPKMKDRDSANSAPKT) is disordered. The span at 40–50 (PTNKKVKPKIP) shows a compositional bias: basic residues. The region spanning 62–159 (PKTQSIMMQV…GYICRKDEAK (98 aa)) is the Ig-like C2-type 1 domain. Cys-96 and Cys-143 form a disulfide bridge. Residues Asn-132 and Asn-219 are each glycosylated (N-linked (GlcNAc...) asparagine). The region spanning 272 to 375 (PSTTILASSN…TTVATTVEFS (104 aa)) is the Ig-like C2-type 2 domain. Cys-293 and Cys-357 are disulfide-bonded.

In terms of assembly, forms a complex composed of PDGFRL, TNK2 and GRB2. Expressed in colon, lung and liver.

It localises to the secreted. This chain is Platelet-derived growth factor receptor-like protein (PDGFRL), found in Homo sapiens (Human).